The following is a 159-amino-acid chain: Ribosomal RNA large subunit methyltransferase H (159 aa).

S-adenosyl-L-methionine contacts are provided by residues Leu76, Gly108, and 127 to 132 (FSKMTF).

The protein belongs to the RNA methyltransferase RlmH family. In terms of assembly, homodimer.

Its subcellular location is the cytoplasm. It carries out the reaction pseudouridine(1915) in 23S rRNA + S-adenosyl-L-methionine = N(3)-methylpseudouridine(1915) in 23S rRNA + S-adenosyl-L-homocysteine + H(+). Functionally, specifically methylates the pseudouridine at position 1915 (m3Psi1915) in 23S rRNA. This is Ribosomal RNA large subunit methyltransferase H from Lachnoclostridium phytofermentans (strain ATCC 700394 / DSM 18823 / ISDg) (Clostridium phytofermentans).